The following is a 535-amino-acid chain: Probable histone-arginine methyltransferase 1.3 (535 aa).

N-acetylmethionine is present on M1. One can recognise an SAM-dependent MTase PRMT-type domain in the interval 141 to 456 (EASSAKMYFH…QSYTIDLTLS (316 aa)). Residues Q158, R167, G191, E213, and E243 each coordinate S-adenosyl-L-methionine. Residues E257 and E266 contribute to the active site. S271 is an S-adenosyl-L-methionine binding site. Residues 494–517 (VAQEPPLQPQPELSTQQDIQTPND) form a disordered region. The segment covering 507–516 (STQQDIQTPN) has biased composition (polar residues).

It belongs to the class I-like SAM-binding methyltransferase superfamily. Protein arginine N-methyltransferase family. Interacts with PQT3 in the nucleus. Ubiquitinated by PQT3.

It is found in the nucleus. The protein localises to the cytoplasm. The catalysed reaction is L-arginyl-[protein] + 2 S-adenosyl-L-methionine = N(omega),N(omega)-dimethyl-L-arginyl-[protein] + 2 S-adenosyl-L-homocysteine + 2 H(+). Its function is as follows. Methylates (mono- and asymmetric dimethylation) the guanidino nitrogens of arginyl residues in several proteins involved in DNA packaging, transcription regulation, and mRNA stability. Recruited to promoters upon gene activation, methylates histone H3 and activates transcription via chromatin remodeling. Positive regulator in the oxidative stress tolerance that promotes the expression of enzymes preventing oxidative stress such as APX1 and GPX1 by histone methylation (H3R17me2a). Confers tolerance to cadmium CdCl(2) and salt NaCl stresses. The protein is Probable histone-arginine methyltransferase 1.3 (PRMT13) of Arabidopsis thaliana (Mouse-ear cress).